Here is a 1070-residue protein sequence, read N- to C-terminus: DNA-directed RNA polymerase subunit beta (1070 aa).

This sequence belongs to the RNA polymerase beta chain family. As to quaternary structure, in plastids the minimal PEP RNA polymerase catalytic core is composed of four subunits: alpha, beta, beta', and beta''. When a (nuclear-encoded) sigma factor is associated with the core the holoenzyme is formed, which can initiate transcription.

It is found in the plastid. Its subcellular location is the chloroplast. The enzyme catalyses RNA(n) + a ribonucleoside 5'-triphosphate = RNA(n+1) + diphosphate. Its function is as follows. DNA-dependent RNA polymerase catalyzes the transcription of DNA into RNA using the four ribonucleoside triphosphates as substrates. This Chaetosphaeridium globosum (Charophycean green alga) protein is DNA-directed RNA polymerase subunit beta.